A 606-amino-acid polypeptide reads, in one-letter code: Glutamine--fructose-6-phosphate aminotransferase [isomerizing] (606 aa).

C2 (nucleophile; for GATase activity) is an active-site residue. The 217-residue stretch at C2–G218 folds into the Glutamine amidotransferase type-2 domain. 2 SIS domains span residues F278–V424 and L448–P596. The active-site For Fru-6P isomerization activity is the K601.

As to quaternary structure, homodimer.

The protein localises to the cytoplasm. The enzyme catalyses D-fructose 6-phosphate + L-glutamine = D-glucosamine 6-phosphate + L-glutamate. Catalyzes the first step in hexosamine metabolism, converting fructose-6P into glucosamine-6P using glutamine as a nitrogen source. The polypeptide is Glutamine--fructose-6-phosphate aminotransferase [isomerizing] (Chlamydia trachomatis serovar D (strain ATCC VR-885 / DSM 19411 / UW-3/Cx)).